The sequence spans 162 residues: Novel acetylcholine receptor chaperone (162 aa).

Topologically, residues 1-5 (MASPR) are cytoplasmic. Residues 6–26 (TVTIVALSVTLGLFFVFMGTI) traverse the membrane as a helical segment. Residues 27-61 (KLTPRLSKDAYSEMKRAYKSYVKALPALKKIGISS) are Lumenal-facing. A helical membrane pass occupies residues 62–82 (VFLRKAIGSLELACGIVLTLV). The Cytoplasmic portion of the chain corresponds to 83–88 (PGRPKD). The chain crosses the membrane as a helical span at residues 89 to 109 (VANFILLLLVLIVLFFHQLVG). The Lumenal segment spans residues 110-114 (DPLKR). Residues 115–131 (YAHALVFGILLTCRLLV) form a helical membrane-spanning segment. The Cytoplasmic segment spans residues 132–162 (SRQPEEEFPEKKLSRGNNGAHSREPIKMKVS). The disordered stretch occupies residues 141–162 (EKKLSRGNNGAHSREPIKMKVS). Basic and acidic residues predominate over residues 152–162 (HSREPIKMKVS).

It belongs to the DoxX family.

It is found in the peroxisome membrane. The protein resides in the cytoplasmic vesicle. Its subcellular location is the endoplasmic reticulum membrane. Functionally, molecular chaperone which mediates the proper assembly and functional expression of the nicotinic acetylcholine receptors (nAChRs) throughout the brain. Essential for the proper folding, assembly, function and surface trafficking of alpha-7 (CHRNA7), alpha-4-beta-2, alpha-3-beta-2 and alpha-3-beta-4 receptors. The sequence is that of Novel acetylcholine receptor chaperone (tmem35a) from Xenopus tropicalis (Western clawed frog).